The sequence spans 271 residues: uncharacterized protein (271 aa).

The interval 1 to 202 is disordered; that stretch reads MLNSPGTRRP…APSSALSHQG (202 aa). Residues 10–23 are compositionally biased toward basic and acidic residues; the sequence is PVKEAQKYGEDSQK. Composition is skewed to low complexity over residues 33 to 50 and 59 to 73; these read RSSV…SSSP and GRPS…TSAP. Polar residues predominate over residues 92–101; the sequence is TRSSANQLPQ. Basic residues predominate over residues 121-142; sequence LRRRSHGDRCVPRSRRRPRPRP.

This is an uncharacterized protein from Homo sapiens (Human).